The sequence spans 214 residues: Urease accessory protein UreF (214 aa).

Residues 70 to 95 form a disordered region; the sequence is AAAGEAGDAETDARTPSPAARAASRA. Residues 83–95 show a composition bias toward low complexity; the sequence is RTPSPAARAASRA.

Belongs to the UreF family. As to quaternary structure, ureD, UreF and UreG form a complex that acts as a GTP-hydrolysis-dependent molecular chaperone, activating the urease apoprotein by helping to assemble the nickel containing metallocenter of UreC. The UreE protein probably delivers the nickel.

The protein localises to the cytoplasm. Functionally, required for maturation of urease via the functional incorporation of the urease nickel metallocenter. The sequence is that of Urease accessory protein UreF from Mycolicibacterium vanbaalenii (strain DSM 7251 / JCM 13017 / BCRC 16820 / KCTC 9966 / NRRL B-24157 / PYR-1) (Mycobacterium vanbaalenii).